A 557-amino-acid polypeptide reads, in one-letter code: Potassium-transporting ATPase potassium-binding subunit (557 aa).

12 helical membrane-spanning segments follow: residues 5-25 (GFLLIATFLLVLMVLARPLGS), 63-83 (LCAILGLNMLGLAVLFFMLLG), 132-152 (GLTVQNFLSAASGIAVIFALI), 170-190 (LLRITLWVLVPVALLIALFFI), 253-273 (FVQMLAIFLIPTALCFAFGEV), 283-303 (LLWAMSVIFVICVGVVMWAEV), 329-349 (VLVSSLFAVVTTAASCGAVIA), 356-376 (ALGGMVPMWLMQIGEVVFGGV), 379-399 (GLYGMMLFVLLAVFIAGLMIG), 416-436 (LTALAILVTPTLVLMGAALAM), 484-504 (LLAFCMFVGRFGVIIPVMAIA), and 526-546 (LFVGLLIGTVLLVGALTFIPA).

This sequence belongs to the KdpA family. The system is composed of three essential subunits: KdpA, KdpB and KdpC.

The protein localises to the cell inner membrane. In terms of biological role, part of the high-affinity ATP-driven potassium transport (or Kdp) system, which catalyzes the hydrolysis of ATP coupled with the electrogenic transport of potassium into the cytoplasm. This subunit binds the periplasmic potassium ions and delivers the ions to the membrane domain of KdpB through an intramembrane tunnel. The chain is Potassium-transporting ATPase potassium-binding subunit from Escherichia coli (strain K12 / MC4100 / BW2952).